The primary structure comprises 848 residues: Coiled-coil domain-containing protein 110 (848 aa).

The interval 41-62 (SEGVKESGGNEPEYGCASEPEN) is disordered. Residues 442 to 794 (LQNYLKESLQ…LSDKVSSQNN (353 aa)) adopt a coiled-coil conformation. Phosphoserine is present on serine 620.

It localises to the nucleus. In Mus musculus (Mouse), this protein is Coiled-coil domain-containing protein 110 (Ccdc110).